Consider the following 339-residue polypeptide: ATPase GET3 (339 aa).

An ATP-binding site is contributed by 37-44; that stretch reads KGGVGKTT. Asp66 is an active-site residue. Residues Glu237 and Asn264 each contribute to the ATP site. Zn(2+) contacts are provided by Cys275 and Cys278.

It belongs to the arsA ATPase family. Homodimer.

It is found in the cytoplasm. It localises to the endoplasmic reticulum. Functionally, ATPase required for the post-translational delivery of tail-anchored (TA) proteins to the endoplasmic reticulum. Recognizes and selectively binds the transmembrane domain of TA proteins in the cytosol. This complex then targets to the endoplasmic reticulum by membrane-bound receptors, where the tail-anchored protein is released for insertion. This process is regulated by ATP binding and hydrolysis. ATP binding drives the homodimer towards the closed dimer state, facilitating recognition of newly synthesized TA membrane proteins. ATP hydrolysis is required for insertion. Subsequently, the homodimer reverts towards the open dimer state, lowering its affinity for the membrane-bound receptor, and returning it to the cytosol to initiate a new round of targeting. The polypeptide is ATPase GET3 (Rhodotorula glutinis (Yeast)).